The chain runs to 331 residues: CRISPR-associated endonuclease Cas1 (331 aa).

Mn(2+)-binding residues include Glu-158, His-223, and Asp-238.

Belongs to the CRISPR-associated endonuclease Cas1 family. As to quaternary structure, homodimer, forms a heterotetramer with a Cas2 homodimer. Mg(2+) serves as cofactor. Requires Mn(2+) as cofactor.

CRISPR (clustered regularly interspaced short palindromic repeat), is an adaptive immune system that provides protection against mobile genetic elements (viruses, transposable elements and conjugative plasmids). CRISPR clusters contain spacers, sequences complementary to antecedent mobile elements, and target invading nucleic acids. CRISPR clusters are transcribed and processed into CRISPR RNA (crRNA). Acts as a dsDNA endonuclease. Involved in the integration of spacer DNA into the CRISPR cassette. Plasmid targeted by CRISPR locus P1 transform wild-type cells very poorly. The polypeptide is CRISPR-associated endonuclease Cas1 (Haloferax volcanii (strain ATCC 29605 / DSM 3757 / JCM 8879 / NBRC 14742 / NCIMB 2012 / VKM B-1768 / DS2) (Halobacterium volcanii)).